A 159-amino-acid chain; its full sequence is Ribosomal RNA large subunit methyltransferase H (159 aa).

S-adenosyl-L-methionine-binding positions include Leu-76, Gly-108, and 127-132; that span reads FSKMTF.

It belongs to the RNA methyltransferase RlmH family. Homodimer.

It localises to the cytoplasm. It carries out the reaction pseudouridine(1915) in 23S rRNA + S-adenosyl-L-methionine = N(3)-methylpseudouridine(1915) in 23S rRNA + S-adenosyl-L-homocysteine + H(+). Specifically methylates the pseudouridine at position 1915 (m3Psi1915) in 23S rRNA. This chain is Ribosomal RNA large subunit methyltransferase H, found in Staphylococcus aureus (strain Mu3 / ATCC 700698).